Consider the following 597-residue polypeptide: MKNIRNFSIIAHIDHGKSTLADRFIQYCGGLDLREMSTQVLDSMDIEKERGITIKAQTAALNYKARDGQVYQLNLIDTPGHVDFSYEVSRSLSACEGALLVVDASQGVEAQTVANCYTAIDLGVEVVPVLNKIDLPAADPERVEQEIEDIIGIDAVGAVQCSAKSGIGVEDVLEEIVAKIPAPAGDENAPLQAVIVDSWFDNYVGVVMLIRVKNGTIKLKDKVRFMSTKAETQVEQLGVFTPKSVQKQELKAGEVGFLITGVKELGQAKVGDTVTLIANPASEPLPGFQEVQSQVFAGLYPVESHDYEALRDALEKLQLNDASLKFEPEVSQALGFGFRCGFLGLLHLEIVQERLEREFDMDLITTAPTVVYEVVLKNGEKIEVENPSKLPDIGSIETILEPIITATILVPQEYVGNVMTLCNQKRGVQVNMQYMGRQVMLTYDLPMNEVVMDFFDKLKSTSRGYASLDYHFKEFQPSDLIKLDIMVNGEKVDALSLIVHRQSAVHRGRELASKMRELIPRQMFDIAVQAAIGSQIIARENVKALRKNVLAKCYGGDITRKKKLLEKQKAGKRRMKQVGNVEIPQSAFLAILQVSDK.

A tr-type G domain is found at Lys-2–Ala-184. Residues Asp-14 to Thr-19 and Asn-131 to Asp-134 contribute to the GTP site.

Belongs to the TRAFAC class translation factor GTPase superfamily. Classic translation factor GTPase family. LepA subfamily.

It localises to the cell inner membrane. The catalysed reaction is GTP + H2O = GDP + phosphate + H(+). In terms of biological role, required for accurate and efficient protein synthesis under certain stress conditions. May act as a fidelity factor of the translation reaction, by catalyzing a one-codon backward translocation of tRNAs on improperly translocated ribosomes. Back-translocation proceeds from a post-translocation (POST) complex to a pre-translocation (PRE) complex, thus giving elongation factor G a second chance to translocate the tRNAs correctly. Binds to ribosomes in a GTP-dependent manner. This Neisseria meningitidis serogroup A / serotype 4A (strain DSM 15465 / Z2491) protein is Elongation factor 4.